The primary structure comprises 511 residues: Tryptophan 5-halogenase PyrH (511 aa).

Residues Gly-10, Ala-13, Ser-36, Val-39, Ile-42, Val-44, and Ala-47 each contribute to the FAD site. Ser-50 serves as a coordination point for L-tryptophan. Residue Lys-75 is part of the active site. L-tryptophan contacts are provided by Pro-93, Gln-160, and Gln-163. Residues Val-195 and Leu-345 each coordinate FAD. Thr-356 and Gly-357 together coordinate chloride. FAD is bound at residue Ile-358. Gly-450 and Tyr-454 together coordinate L-tryptophan.

It belongs to the flavin-dependent halogenase family. Bacterial tryptophan halogenase subfamily. As to quaternary structure, homodimer.

The enzyme catalyses L-tryptophan + FADH2 + chloride + O2 = 5-chloro-L-tryptophan + FAD + 2 H2O. It participates in antibiotic biosynthesis. In terms of biological role, involved in the biosynthesis of the antibiotic compound pyrroindomycin B. Catalyzes the chlorination of tryptophan (Trp) at C5 position to yield 5-chloro-L-tryptophan. It is also able to use bromide ions to generate monobrominated Trp, but the brominating activity is only about 75% of the chlorinating activity. This chain is Tryptophan 5-halogenase PyrH, found in Streptomyces rugosporus.